We begin with the raw amino-acid sequence, 364 residues long: Trans-enoyl reductase ccsC (364 aa).

Position 52–55 (cysteine 52–lysine 55) interacts with NADP(+). Threonine 141–methionine 148 contacts substrate. Residues serine 176–valine 179, serine 199–asparagine 202, tyrosine 217, and leucine 264–glutamate 265 each bind NADP(+). Glycine 284–leucine 288 is a substrate binding site. An NADP(+)-binding site is contributed by valine 353–serine 354.

It belongs to the zinc-containing alcohol dehydrogenase family. Monomer.

Its pathway is mycotoxin biosynthesis. Functionally, trans-enoyl reductase; part of the gene cluster that mediates the biosynthesis of a family of the mycotoxins cytochalasins E and K. The hybrid PKS-NRPS synthetase ccsA and the enoyl reductase ccsC are responsible for fusion of phenylalanine with an octaketide backbone and subsequent release of the stable tetramic acid precursor. The polyketide synthase module (PKS) of the PKS-NRPS ccsA is responsible for the synthesis of the octaketide backbone. The downstream nonribosomal peptide synthetase (NRPS) amidates the carboxyl end of the octaketide with a phenylalanine. A reductase-like domain (R) at the C-terminus catalyzes the reductive release of the polyketide-amino acid intermediate. Because ccsA lacks a designated enoylreductase (ER) domain, the required activity is provided the enoyl reductase ccsC. Upon formation of the 11-membered carbocycle-fused perhydroisoindolone intermediate, a number of oxidative steps are required to afford the final cytochalasin E and K, including two hydroxylations at C17 and C18, one alcohol oxidation at C17, one epoxidation at C6 and C7 and two Baeyer-Villiger oxidations. The oxidative modification at C17, C18 and the C6-C7 epoxidation are likely to be catalyzed by the two cytochrome P450 oxygenases ccsD and ccsG. CcsD may be responsible for the epoxidation of the C6-C7 double bond. CcsG may be responsible for the successive oxidative modifications at C17 and C18. The double Baeyer-Villiger oxidations of ketocytochalasin to precytochalasin and cytochalasin Z(16) are among the final steps leading to cytochalasin E and K and are catalyzed by ccsB. The first oxygen insertion step follows that of the classic BVMO mechanism, generating the ester precytochalasin. Release of precytochalasin into an aqueous environment can generate the shunt product iso-precytochalasin through spontaneous isomerization. Alternatively, precytochalasin can undergo further oxidation by ccsB to yield the in-line carbonate-containing cytochalasin Z(16). Cytochalasin Z(16) is a precursor to cytochalasin E and cytochalasin K, whereas iso-precytochalasin is a precursor to cytochalasin Z(17) and rosellichalasin. The hydrolyase ccsE may catalyze hydrolysis of epoxide bond in cytochalasin E to afford cytochalasin K. The function of ccsF has not been assigned but it may play a role in post-PKS-NRPS biosynthetic step, resistance or transport of cytochalasins and related PKS-NRPS products. The protein is Trans-enoyl reductase ccsC of Aspergillus clavatus (strain ATCC 1007 / CBS 513.65 / DSM 816 / NCTC 3887 / NRRL 1 / QM 1276 / 107).